The primary structure comprises 364 residues: Carbamoyl phosphate synthase pyrimidine-specific small chain (364 aa).

Positions 1 to 169 (MKRYLVLEDG…AYPNPATGPN (169 aa)) are CPSase. Ser-45, Gly-217, and Gly-219 together coordinate L-glutamine. A Glutamine amidotransferase type-1 domain is found at 169–356 (NVVVVDFGLK…IDLMAANQAT (188 aa)). Cys-244 (nucleophile) is an active-site residue. L-glutamine-binding residues include Leu-245, Gln-248, Asn-286, Gly-288, and Tyr-289. Residues His-329 and Asp-331 contribute to the active site.

It belongs to the CarA family. As to quaternary structure, composed of two chains; the small (or glutamine) chain promotes the hydrolysis of glutamine to ammonia, which is used by the large (or ammonia) chain to synthesize carbamoyl phosphate. Tetramer of heterodimers (alpha,beta)4.

The catalysed reaction is hydrogencarbonate + L-glutamine + 2 ATP + H2O = carbamoyl phosphate + L-glutamate + 2 ADP + phosphate + 2 H(+). The enzyme catalyses L-glutamine + H2O = L-glutamate + NH4(+). Its pathway is pyrimidine metabolism; UMP biosynthesis via de novo pathway; (S)-dihydroorotate from bicarbonate: step 1/3. Its activity is regulated as follows. Inhibited by pyrimidine. Its function is as follows. Small subunit of the glutamine-dependent carbamoyl phosphate synthetase (CPSase). CPSase catalyzes the formation of carbamoyl phosphate from the ammonia moiety of glutamine, carbonate, and phosphate donated by ATP, constituting the first step of the biosynthetic pathway leading to pyrimidine nucleotides. The small subunit (glutamine amidotransferase) binds and cleaves glutamine to supply the large subunit with the substrate ammonia. This is Carbamoyl phosphate synthase pyrimidine-specific small chain from Lactiplantibacillus plantarum (strain ATCC BAA-793 / NCIMB 8826 / WCFS1) (Lactobacillus plantarum).